The primary structure comprises 509 residues: Tyrosine-protein kinase Lck (509 aa).

Gly-2 carries the N-myristoyl glycine lipid modification. The segment at 2–72 is interactions with CD4 and CD8; the sequence is GCGCSSHPED…DNLVIALHSY (71 aa). S-palmitoyl cysteine attachment occurs at residues Cys-3 and Cys-5. Positions 61 to 121 constitute an SH3 domain; the sequence is LQDNLVIALH…PFNFVAKANS (61 aa). A Glycyl lysine isopeptide (Lys-Gly) (interchain with G-Cter in ubiquitin) cross-link involves residue Lys-99. Residue Ser-102 is modified to Phosphoserine. The SH2 domain maps to 127–224; that stretch reads WFFKNLSRKD…GLCTRLSRPC (98 aa). Residues 154 to 242 form an interaction with PTPRH region; sequence RESESTAGSF…WWEDEWEVPR (89 aa). Thr-159 is modified (phosphothreonine). The residue at position 162 (Ser-162) is a Phosphoserine. Position 192 is a phosphotyrosine (Tyr-192). Ser-194 carries the phosphoserine modification. A Protein kinase domain is found at 245-498; the sequence is LKLVERLGAG…YLRSVLEDFF (254 aa). ATP is bound by residues 251 to 259 and Lys-273; that span reads LGAGQFGEV. A Glycyl lysine isopeptide (Lys-Gly) (interchain with G-Cter in ubiquitin) cross-link involves residue Lys-276. Residue Asp-364 is the Proton acceptor of the active site. Position 394 is a phosphotyrosine; by autocatalysis (Tyr-394). The residue at position 505 (Tyr-505) is a Phosphotyrosine; by CSK.

This sequence belongs to the protein kinase superfamily. Tyr protein kinase family. SRC subfamily. As to quaternary structure, binds to the cytoplasmic domain of cell surface receptors, such as AXL, CD2, CD4, CD5, CD8, CD44, CD45 and CD122. Also binds to effector molecules, such as PI4K, VAV1, RASA1, FYB1 and to other protein kinases including CDK1, RAF1, ZAP70 and SYK. Binds to phosphatidylinositol 3'-kinase (PI3K) from T-lymphocytes through its SH3 domain and to the tyrosine phosphorylated form of KHDRBS1/p70 through its SH2 domain. This interaction inhibits its tyrosine-kinase activity. Interacts with SQSTM1. Interacts with phosphorylated LIME1. Interacts with CBLB and PTPRH. Interacts with RUNX3. Forms a signaling complex with EPHA1, PTK2B and PI3-KINASE; upon activation by EFNA1 which may regulate T-lymphocyte migration. Associates with ZAP70 and RHOH; these interactions allow LCK-mediated RHOH and CD3 subunit phosphorylation in the presence of functional ZAP70. Interacts with UNC119; this interaction plays a crucial role in activation of LCK. Interacts with CEACAM1 (via cytoplasmic domain); mediates CEACAM1 phosphorylation resulting in PTPN6 recruitment that dephosphorylates TCR stimulation-induced CD247 and ZAP70. Interacts with CD160. Interacts with CD48. In terms of assembly, (Microbial infection) Interacts with herpes simplex virus 1 UL46; this interaction activates LCK. (Microbial infection) Interacts with HIV-1 Nef through its SH3 domain. Autophosphorylated on Tyr-394, increasing enzymatic activity, this site is dephosphorylated by PTN22. Phosphorylated on Tyr-505 by CSK, decreasing activity. Dephosphorylated by PTPRC/CD45. Dephosphorylation at Tyr-394 by PTPN2 negatively regulates T-cell receptor signaling. Dephosphorylation at Tyr-394 by DUSP22 negatively regulates T-cell receptor signaling. Post-translationally, myristoylation is required prior to palmitoylation. In terms of processing, palmitoylation regulates association with the plasma membrane and could be mediated by ZDHHC2. 'Lys-63'-linked ubiquitinated at Lys-99 and Lys-276 by UBR2; this modification is required for autophosphorylation at Tyr-394. Expressed specifically in lymphoid cells.

The protein localises to the cell membrane. It is found in the cytoplasm. Its subcellular location is the cytosol. It catalyses the reaction L-tyrosyl-[protein] + ATP = O-phospho-L-tyrosyl-[protein] + ADP + H(+). The relative activities of the inhibitory tyrosine-protein kinase CSK and the activating tyrosine-protein phosphatase PTPRC/CD45 determine the level of LCK activity. These interactions allow rapid and efficient activation of LCK in response to TCR stimulation. Functionally, non-receptor tyrosine-protein kinase that plays an essential role in the selection and maturation of developing T-cells in the thymus and in the function of mature T-cells. Plays a key role in T-cell antigen receptor (TCR)-linked signal transduction pathways. Constitutively associated with the cytoplasmic portions of the CD4 and CD8 surface receptors. Association of the TCR with a peptide antigen-bound MHC complex facilitates the interaction of CD4 and CD8 with MHC class II and class I molecules, respectively, thereby recruiting the associated LCK protein to the vicinity of the TCR/CD3 complex. LCK then phosphorylates tyrosine residues within the immunoreceptor tyrosine-based activation motifs (ITAM) of the cytoplasmic tails of the TCR-gamma chains and CD3 subunits, initiating the TCR/CD3 signaling pathway. Once stimulated, the TCR recruits the tyrosine kinase ZAP70, that becomes phosphorylated and activated by LCK. Following this, a large number of signaling molecules are recruited, ultimately leading to lymphokine production. LCK also contributes to signaling by other receptor molecules. Associates directly with the cytoplasmic tail of CD2, which leads to hyperphosphorylation and activation of LCK. Also plays a role in the IL2 receptor-linked signaling pathway that controls the T-cell proliferative response. Binding of IL2 to its receptor results in increased activity of LCK. Is expressed at all stages of thymocyte development and is required for the regulation of maturation events that are governed by both pre-TCR and mature alpha beta TCR. Phosphorylates other substrates including RUNX3, PTK2B/PYK2, the microtubule-associated protein MAPT, RHOH or TYROBP. Interacts with FYB2. The protein is Tyrosine-protein kinase Lck (LCK) of Homo sapiens (Human).